Here is a 340-residue protein sequence, read N- to C-terminus: Phosphoribosylformylglycinamidine cyclo-ligase (340 aa).

This sequence belongs to the AIR synthase family.

The protein resides in the cytoplasm. It carries out the reaction 2-formamido-N(1)-(5-O-phospho-beta-D-ribosyl)acetamidine + ATP = 5-amino-1-(5-phospho-beta-D-ribosyl)imidazole + ADP + phosphate + H(+). It functions in the pathway purine metabolism; IMP biosynthesis via de novo pathway; 5-amino-1-(5-phospho-D-ribosyl)imidazole from N(2)-formyl-N(1)-(5-phospho-D-ribosyl)glycinamide: step 2/2. The polypeptide is Phosphoribosylformylglycinamidine cyclo-ligase (Streptococcus pneumoniae (strain CGSP14)).